The chain runs to 180 residues: MGNFHATTIFAVHHNGECAMAGDGQVTMGNAVVMKHTARKVRKLFQGKVLAGFAGSVADAFTLFEMFEGKLEEYNGNLQRAAVEMAKQWRGDKMLRQLEAMLIVMDKTTMLLVSGTGEVIEPDDGILAIGSGGNYALSAGRALKQYASEHLTAKQIAKASLDIAGDICVYTNHNIIVEEL.

The active site involves threonine 7. Glycine 165, cysteine 168, and threonine 171 together coordinate Na(+).

This sequence belongs to the peptidase T1B family. HslV subfamily. As to quaternary structure, a double ring-shaped homohexamer of HslV is capped on each side by a ring-shaped HslU homohexamer. The assembly of the HslU/HslV complex is dependent on binding of ATP.

Its subcellular location is the cytoplasm. The enzyme catalyses ATP-dependent cleavage of peptide bonds with broad specificity.. Its activity is regulated as follows. Allosterically activated by HslU binding. Protease subunit of a proteasome-like degradation complex believed to be a general protein degrading machinery. This is ATP-dependent protease subunit HslV from Bacillus cereus (strain ATCC 10987 / NRS 248).